Reading from the N-terminus, the 156-residue chain is Cyclic pyranopterin monophosphate synthase (156 aa).

Substrate contacts are provided by residues 75–77 (LCH) and 111–112 (ME). Aspartate 126 is an active-site residue.

This sequence belongs to the MoaC family. In terms of assembly, homohexamer; trimer of dimers.

It catalyses the reaction (8S)-3',8-cyclo-7,8-dihydroguanosine 5'-triphosphate = cyclic pyranopterin phosphate + diphosphate. Its pathway is cofactor biosynthesis; molybdopterin biosynthesis. Functionally, catalyzes the conversion of (8S)-3',8-cyclo-7,8-dihydroguanosine 5'-triphosphate to cyclic pyranopterin monophosphate (cPMP). In Erythrobacter litoralis (strain HTCC2594), this protein is Cyclic pyranopterin monophosphate synthase.